The chain runs to 87 residues: Small ribosomal subunit protein bS20 (87 aa).

The tract at residues 1–22 (MANIKSQIKRIGTNKKAQERNK) is disordered.

Belongs to the bacterial ribosomal protein bS20 family.

In terms of biological role, binds directly to 16S ribosomal RNA. The sequence is that of Small ribosomal subunit protein bS20 from Clavibacter michiganensis subsp. michiganensis (strain NCPPB 382).